Consider the following 1070-residue polypeptide: DNA-directed RNA polymerase subunit beta (1070 aa).

It belongs to the RNA polymerase beta chain family. As to quaternary structure, in plastids the minimal PEP RNA polymerase catalytic core is composed of four subunits: alpha, beta, beta', and beta''. When a (nuclear-encoded) sigma factor is associated with the core the holoenzyme is formed, which can initiate transcription.

The protein resides in the plastid. It is found in the chloroplast. The enzyme catalyses RNA(n) + a ribonucleoside 5'-triphosphate = RNA(n+1) + diphosphate. In terms of biological role, DNA-dependent RNA polymerase catalyzes the transcription of DNA into RNA using the four ribonucleoside triphosphates as substrates. The chain is DNA-directed RNA polymerase subunit beta from Vitis vinifera (Grape).